The sequence spans 118 residues: Non-specific lipid-transfer protein-like 1 (118 aa).

The 109-residue stretch at S5–M113 folds into the SCP2 domain.

The sequence is that of Non-specific lipid-transfer protein-like 1 (nlt-1) from Caenorhabditis elegans.